Reading from the N-terminus, the 90-residue chain is Small ribosomal subunit protein uS17 (90 aa).

This sequence belongs to the universal ribosomal protein uS17 family. As to quaternary structure, part of the 30S ribosomal subunit.

One of the primary rRNA binding proteins, it binds specifically to the 5'-end of 16S ribosomal RNA. In Paraburkholderia phymatum (strain DSM 17167 / CIP 108236 / LMG 21445 / STM815) (Burkholderia phymatum), this protein is Small ribosomal subunit protein uS17.